We begin with the raw amino-acid sequence, 376 residues long: Immunoglobulin G-binding protein H (376 aa).

The signal sequence occupies residues 1–41 (MTRQQTKKNYSLRKLKTGTASVAVALTVLGAGFANQTTVKA). The disordered stretch occupies residues 69–271 (TSLENEKLKS…AAKKELEANH (203 aa)). Composition is skewed to basic and acidic residues over residues 72-146 (ENEK…KRYQ), 156-203 (ETEK…DKQI), 211-245 (LSRD…DKQI), and 253-271 (LSRD…EANH). C repeat units follow at residues 153 to 187 (QQLE…EAEH), 195 to 229 (QKLK…EANH), and 237 to 271 (QKLK…EANH). D repeat units lie at residues 272-277 (QKLEAE), 278-283 (AKALKE), 286-291 (AKQAEE), and 293-298 (AKLRAG). Positions 292 to 348 (LAKLRAGKASDSQTPDTKPGNKAVPGKGQAPQAGTKPNQNKAPMKETKRQLPSTGET) are disordered. An LPXTG sorting signal motif is present at residues 342–346 (LPSTG). A Pentaglycyl murein peptidoglycan amidated threonine modification is found at Thr-345. Positions 346–376 (GETANPFFTAAALTVMATAGVAAVVKRKEEN) are cleaved as a propeptide — removed by sortase.

This sequence belongs to the M protein family.

The protein resides in the secreted. Its subcellular location is the cell wall. This is Immunoglobulin G-binding protein H from Streptococcus pyogenes serotype M1.